The following is a 323-amino-acid chain: MSVRTDLAVEAKEIYEEKNAGEIPGVELKEYRQGRIKVTEVNVLNEQGEKAMNKAIGNYITLEIPDINQYDTQYKEHISKILAKTLMPLLKIDDSMTALVVGLGNWNITPDALGPKVIEKIMITRHLKEYIPNEIDEGIRPVCGISPGVLGITGIETAEIIKAVSNKIKPDIILCIDALASRRLERVNRTIQIGNTGISPGAGVGNRRMELNEKTLGVPVIAIGVPTVVDAATVANDTIDMVLDEMIKVADKDKNFYNMLKSLDRDEKERMIKEVLNPYVGELMVTPKDVDTLMDSISKIISTGINIALQPALELEDINSYLN.

Residues M1–D6 constitute a propeptide that is removed on maturation.

Belongs to the peptidase A25 family. In terms of assembly, homotetramer. Post-translationally, autoproteolytically processed. The inactive tetrameric zymogen termed p46 autoprocesses to a smaller form termed p41, which is active only during spore germination.

The enzyme catalyses Endopeptidase action with P4 Glu or Asp, P1 preferably Glu &gt; Asp, P1' hydrophobic and P2' Ala.. Initiates the rapid degradation of small, acid-soluble proteins during spore germination. In Clostridium tetani (strain Massachusetts / E88), this protein is Germination protease.